The sequence spans 56 residues: Large ribosomal subunit protein bL32 (56 aa).

Residues 1–16 are compositionally biased toward basic residues; it reads MAVQKNRKTRSKRGMR. A disordered region spans residues 1-28; the sequence is MAVQKNRKTRSKRGMRRSHDALTTAALS.

It belongs to the bacterial ribosomal protein bL32 family.

The chain is Large ribosomal subunit protein bL32 from Vibrio campbellii (strain ATCC BAA-1116).